A 361-amino-acid polypeptide reads, in one-letter code: ATP-dependent 6-phosphofructokinase 1 (361 aa).

ATP-binding positions include Gly14, 79-80 (KG), and 116-119 (GDGS). Asp117 contacts Mg(2+). Substrate is bound by residues 140 to 142 (TID), Arg177, 184 to 186 (MGR), Glu237, Arg278, and 284 to 287 (HIQR). The active-site Proton acceptor is the Asp142.

Belongs to the phosphofructokinase type A (PFKA) family. Mixed-substrate PFK group III subfamily. As to quaternary structure, homodimer or homotetramer. It depends on Mg(2+) as a cofactor.

The protein localises to the cytoplasm. It carries out the reaction beta-D-fructose 6-phosphate + ATP = beta-D-fructose 1,6-bisphosphate + ADP + H(+). It participates in carbohydrate degradation; glycolysis; D-glyceraldehyde 3-phosphate and glycerone phosphate from D-glucose: step 3/4. Its function is as follows. Catalyzes the phosphorylation of D-fructose 6-phosphate to fructose 1,6-bisphosphate by ATP, the first committing step of glycolysis. This is ATP-dependent 6-phosphofructokinase 1 from Synechocystis sp. (strain ATCC 27184 / PCC 6803 / Kazusa).